We begin with the raw amino-acid sequence, 416 residues long: Gamma-glutamyl phosphate reductase (416 aa).

This sequence belongs to the gamma-glutamyl phosphate reductase family.

It localises to the cytoplasm. It catalyses the reaction L-glutamate 5-semialdehyde + phosphate + NADP(+) = L-glutamyl 5-phosphate + NADPH + H(+). Its pathway is amino-acid biosynthesis; L-proline biosynthesis; L-glutamate 5-semialdehyde from L-glutamate: step 2/2. Functionally, catalyzes the NADPH-dependent reduction of L-glutamate 5-phosphate into L-glutamate 5-semialdehyde and phosphate. The product spontaneously undergoes cyclization to form 1-pyrroline-5-carboxylate. In Vibrio parahaemolyticus serotype O3:K6 (strain RIMD 2210633), this protein is Gamma-glutamyl phosphate reductase.